The chain runs to 367 residues: Mitochondrial distribution and morphology protein 34 (367 aa).

Residues 1–197 enclose the SMP-LTD domain; the sequence is MSFNFTWPEF…LPSIIHRLSQ (197 aa). 2 disordered regions span residues 267 to 311 and 347 to 367; these read QGLK…ALSS and PAHRPRSSRVHARQKRAFHLS. Positions 286 to 302 are enriched in polar residues; sequence FHTTSRVRVPSSLESNA.

The protein belongs to the MDM34 family. As to quaternary structure, component of the ER-mitochondria encounter structure (ERMES) or MDM complex, composed of MMM1, MDM10, MDM12 and MDM34.

It is found in the mitochondrion outer membrane. Its function is as follows. Component of the ERMES/MDM complex, which serves as a molecular tether to connect the endoplasmic reticulum (ER) and mitochondria. Components of this complex are involved in the control of mitochondrial shape and protein biogenesis, and function in nonvesicular lipid trafficking between the ER and mitochondria. MDM34 is required for the interaction of the ER-resident membrane protein MMM1 and the outer mitochondrial membrane-resident beta-barrel protein MDM10. The chain is Mitochondrial distribution and morphology protein 34 from Malassezia globosa (strain ATCC MYA-4612 / CBS 7966) (Dandruff-associated fungus).